Consider the following 1165-residue polypeptide: Immunoglobulin superfamily member 3 (1165 aa).

Residues 1–20 form the signal peptide; it reads MGTAAGLLLAALLLAGTSWA. Topologically, residues 21–1095 are extracellular; that stretch reads QREVNIQQGP…LQSTICANDA (1075 aa). Ig-like C2-type domains follow at residues 22 to 139, 144 to 262, 276 to 386, 406 to 527, 545 to 661, 678 to 800, 810 to 934, and 951 to 1067; these read REVN…AKMN, PDTL…WFPL, PTDK…RGPS, PLRT…WQLL, FAVT…WTQL, PRLQ…EEAS, PDAN…WYKR, and PALQ…WYLL. Intrachain disulfides connect Cys-43-Cys-121 and Cys-168-Cys-246. Positions 250–252 match the EWI motif motif; that stretch reads EWI. Intrachain disulfides connect Cys-302–Cys-376, Cys-432–Cys-511, Cys-566–Cys-645, Cys-701–Cys-779, Cys-835–Cys-918, and Cys-974–Cys-1051. A helical membrane pass occupies residues 1096–1116; that stretch reads LFYLVFFYPFPIFGILIITIL. Residues 1117–1165 lie on the Cytoplasmic side of the membrane; that stretch reads LVRFRHRPTSKPGEGKNGVPLLWIKEPHLNYSPTCLEPPVLSIHPGTID.

Its subcellular location is the membrane. The protein is Immunoglobulin superfamily member 3 (igsf3) of Xenopus laevis (African clawed frog).